The following is a 155-amino-acid chain: UPF0260 protein NGR_c07710 (155 aa).

It belongs to the UPF0260 family.

This is UPF0260 protein NGR_c07710 from Sinorhizobium fredii (strain NBRC 101917 / NGR234).